Reading from the N-terminus, the 341-residue chain is Galactofuranose transporter permease protein YtfT (341 aa).

The Cytoplasmic segment spans residues 1–25 (MMPQSLPDTTTPKRRFRWPTGMPQL). The chain crosses the membrane as a helical span at residues 26 to 46 (VALLLVLLVDSLVAPHFWQVV). Residues 47–65 (LQDGRLFGSPIDILNRAAP) lie on the Periplasmic side of the membrane. 2 helical membrane-spanning segments follow: residues 66–86 (VALL…DLSV) and 87–107 (GAVM…GFSL). A topological domain (periplasmic) is located at residue Pro108. The helical transmembrane segment at 109-129 (IVLLSALGTGILAGLWNGILV) threads the bilayer. The Cytoplasmic segment spans residues 130–136 (AILKIQP). The chain crosses the membrane as a helical span at residues 137 to 157 (FVATLILMVAGRGVAQLITAG). At 158-174 (QIVTFNSPDLSWFGSGS) the chain is on the periplasmic side. Residues 175–195 (LLFLPTPVIIAVLTLILFWLL) traverse the membrane as a helical segment. The Cytoplasmic portion of the chain corresponds to 196–223 (TRKTALGMFIEAVGINIRAAKNAGVNTR). Residues 224–244 (IIVMLTYVLSGLCAAIAGIIV) form a helical membrane-spanning segment. Over 245 to 255 (AADIRGADANN) the chain is Periplasmic. The helical transmembrane segment at 256–276 (AGLWLELDAILAVVIGGGSLM) threads the bilayer. Residues 277–281 (GGRFN) are Cytoplasmic-facing. A run of 2 helical transmembrane segments spans residues 282–302 (LLLS…ILLS) and 303–323 (GFPP…VLIV). The Cytoplasmic segment spans residues 324-341 (QSQRFISLIKGVRSRDKT).

This sequence belongs to the binding-protein-dependent transport system permease family. AraH/RbsC subfamily. As to quaternary structure, the complex is composed of two ATP-binding proteins (YtfR), two transmembrane proteins (YtfT and YjfF) and a solute-binding protein (YtfQ).

It is found in the cell inner membrane. Functionally, part of the ABC transporter complex YtfQRT-YjfF involved in galactofuranose transport. Probably responsible for the translocation of the substrate across the membrane. This is Galactofuranose transporter permease protein YtfT (ytfT) from Escherichia coli (strain K12).